A 1259-amino-acid polypeptide reads, in one-letter code: Telomerase reverse transcriptase (1259 aa).

The Reverse transcriptase domain occupies 742 to 1067; it reads RGEPRKAVRH…SFMPWSGLLI (326 aa). Positions 837, 999, and 1000 each coordinate Mg(2+).

It belongs to the reverse transcriptase family. Telomerase subfamily. As to quaternary structure, component of the telomerase ribonucleoprotein complex. Expressed in shoot apices and immature embryos.

The protein localises to the nucleus. It localises to the chromosome. It is found in the telomere. The enzyme catalyses DNA(n) + a 2'-deoxyribonucleoside 5'-triphosphate = DNA(n+1) + diphosphate. Telomerase is a ribonucleoprotein enzyme essential for the replication of chromosome termini in most eukaryotes. It elongates telomeres. It is a reverse transcriptase that adds simple sequence repeats to chromosome ends by copying a template sequence within the RNA component of the enzyme. The sequence is that of Telomerase reverse transcriptase (TERT) from Oryza sativa subsp. japonica (Rice).